A 261-amino-acid polypeptide reads, in one-letter code: Chanoclavine-I dehydrogenase easD (261 aa).

The N-terminal stretch at 1–20 is a signal peptide; that stretch reads MPSMTSKVFAITGGASGIGA. Residue isoleucine 18 coordinates NADP(+). The N-linked (GlcNAc...) asparagine glycan is linked to asparagine 43. NADP(+) is bound by residues aspartate 66, arginine 132, tyrosine 166, lysine 170, and threonine 201. The active-site Proton donor is the tyrosine 166. The Lowers pKa of active site Tyr role is filled by lysine 170.

This sequence belongs to the short-chain dehydrogenases/reductases (SDR) family. In terms of assembly, homotetramer.

The enzyme catalyses chanoclavine-I + NAD(+) = chanoclavine-I aldehyde + NADH + H(+). It functions in the pathway alkaloid biosynthesis; ergot alkaloid biosynthesis. Functionally, chanoclavine-I dehydrogenase; part of the gene cluster that mediates the biosynthesis of fungal ergot alkaloid. DmaW catalyzes the first step of ergot alkaloid biosynthesis by condensing dimethylallyl diphosphate (DMAP) and tryptophan to form 4-dimethylallyl-L-tryptophan. The second step is catalyzed by the methyltransferase easF that methylates 4-dimethylallyl-L-tryptophan in the presence of S-adenosyl-L-methionine, resulting in the formation of 4-dimethylallyl-L-abrine. The catalase easC and the FAD-dependent oxidoreductase easE then transform 4-dimethylallyl-L-abrine to chanoclavine-I which is further oxidized by easD in the presence of NAD(+), resulting in the formation of chanoclavine-I aldehyde. Agroclavine dehydrogenase easG then mediates the conversion of chanoclavine-I aldehyde to agroclavine via a non-enzymatic adduct reaction: the substrate is an iminium intermediate that is formed spontaneously from chanoclavine-I aldehyde in the presence of glutathione. The presence of easA is not required to complete this reaction. Further conversion of agroclavine to paspalic acid is a two-step process involving oxidation of agroclavine to elymoclavine and of elymoclavine to paspalic acid, the second step being performed by the elymoclavine oxidase cloA. Paspalic acid is then further converted to D-lysergic acid. Ergopeptines are assembled from D-lysergic acid and three different amino acids by the D-lysergyl-peptide-synthetases composed each of a monomudular and a trimodular nonribosomal peptide synthetase subunit. LpsB and lpsC encode the monomodular subunits responsible for D-lysergic acid activation and incorporation into the ergopeptine backbone. LpsA1 and A2 subunits encode the trimodular nonribosomal peptide synthetase assembling the tripeptide portion of ergopeptines. LpsA1 is responsible for formation of the major ergopeptine, ergotamine, and lpsA2 for alpha-ergocryptine, the minor ergopeptine of the total alkaloid mixture elaborated by C.purpurea. D-lysergyl-tripeptides are assembled by the nonribosomal peptide synthetases and released as N-(D-lysergyl-aminoacyl)-lactams. Cyclolization of the D-lysergyl-tripeptides is performed by the Fe(2+)/2-ketoglutarate-dependent dioxygenase easH which introduces a hydroxyl group into N-(D-lysergyl-aminoacyl)-lactam at alpha-C of the aminoacyl residue followed by spontaneous condensation with the terminal lactam carbonyl group. The protein is Chanoclavine-I dehydrogenase easD of Claviceps purpurea (strain 20.1) (Ergot fungus).